We begin with the raw amino-acid sequence, 352 residues long: Mannonate dehydratase (352 aa).

This sequence belongs to the mannonate dehydratase family. Fe(2+) is required as a cofactor. Mn(2+) serves as cofactor.

The catalysed reaction is D-mannonate = 2-dehydro-3-deoxy-D-gluconate + H2O. It participates in carbohydrate metabolism; pentose and glucuronate interconversion. In terms of biological role, catalyzes the dehydration of D-mannonate. In Paraburkholderia phytofirmans (strain DSM 17436 / LMG 22146 / PsJN) (Burkholderia phytofirmans), this protein is Mannonate dehydratase.